The chain runs to 214 residues: Cytochrome b (214 aa).

4 consecutive transmembrane segments (helical) span residues 31-51 (FGSMLLACLMIQIITGFFLAI), 75-96 (WIMQNTHAISASLFFICIYIHI), 111-131 (WLSGTTLLIILMATAFFGYVL), and 176-196 (FFALHFILPFIIISMSSIHIL). 2 residues coordinate heme b: H81 and H95. Heme b is bound by residues H180 and H194. Residue H199 coordinates a ubiquinone.

The protein belongs to the cytochrome b family. In terms of assembly, the cytochrome bc1 complex contains 3 respiratory subunits (MT-CYB, CYC1 and UQCRFS1), 2 core proteins (UQCRC1 and UQCRC2) and probably 6 low-molecular weight proteins. Heme b is required as a cofactor.

Its subcellular location is the mitochondrion inner membrane. Component of the ubiquinol-cytochrome c reductase complex (complex III or cytochrome b-c1 complex) that is part of the mitochondrial respiratory chain. The b-c1 complex mediates electron transfer from ubiquinol to cytochrome c. Contributes to the generation of a proton gradient across the mitochondrial membrane that is then used for ATP synthesis. The sequence is that of Cytochrome b (MT-CYB) from Bothrops atrox (Barba amarilla).